We begin with the raw amino-acid sequence, 337 residues long: Adenosine deaminase-like protein (337 aa).

Zn(2+)-binding residues include His14 and His16. Residues His16, Asn18, His66, 98–101, and Gly171 contribute to the N(6)-methyl-AMP site; that span reads TTPK. Residue His198 coordinates Zn(2+). Residues Glu201, Asp276, and Asp277 each coordinate N(6)-methyl-AMP. Glu201 acts as the Proton donor in catalysis. Asp276 serves as a coordination point for Zn(2+).

This sequence belongs to the metallo-dependent hydrolases superfamily. Adenosine and AMP deaminases family. In terms of assembly, monomer. Requires Zn(2+) as cofactor.

It catalyses the reaction N(6)-methyl-AMP + H2O + H(+) = IMP + methylamine. Its function is as follows. Catalyzes the hydrolysis of the free cytosolic methylated adenosine nucleotide N(6)-methyl-AMP (N6-mAMP) to produce inositol monophosphate (IMP) and methylamine. Is required for the catabolism of cytosolic N6-mAMP, which is derived from the degradation of mRNA containing N6-methylated adenine (m6A). The protein is Adenosine deaminase-like protein (Ada) of Drosophila melanogaster (Fruit fly).